A 766-amino-acid chain; its full sequence is 5-methyltetrahydropteroyltriglutamate--homocysteine methyltransferase (766 aa).

Residues 23–26 (RELK) and Lys121 contribute to the 5-methyltetrahydropteroyltri-L-glutamate site. Residues 438-440 (IGS) and Glu491 contribute to the L-homocysteine site. L-methionine-binding positions include 438–440 (IGS) and Glu491. Residues 522-523 (RC) and Trp568 each bind 5-methyltetrahydropteroyltri-L-glutamate. Asp606 contributes to the L-homocysteine binding site. Asp606 lines the L-methionine pocket. Glu612 serves as a coordination point for 5-methyltetrahydropteroyltri-L-glutamate. The Zn(2+) site is built by His648, Cys650, and Glu672. Catalysis depends on His701, which acts as the Proton donor. Residue Cys733 coordinates Zn(2+).

It belongs to the vitamin-B12 independent methionine synthase family. The cofactor is Zn(2+).

The enzyme catalyses 5-methyltetrahydropteroyltri-L-glutamate + L-homocysteine = tetrahydropteroyltri-L-glutamate + L-methionine. The protein operates within amino-acid biosynthesis; L-methionine biosynthesis via de novo pathway; L-methionine from L-homocysteine (MetE route): step 1/1. Catalyzes the transfer of a methyl group from 5-methyltetrahydrofolate to homocysteine resulting in methionine formation. This is 5-methyltetrahydropteroyltriglutamate--homocysteine methyltransferase from Photobacterium profundum (strain SS9).